Reading from the N-terminus, the 205-residue chain is Thiamine-phosphate synthase (205 aa).

4-amino-2-methyl-5-(diphosphooxymethyl)pyrimidine-binding positions include glutamine 35–lysine 39 and asparagine 67. The Mg(2+) site is built by aspartate 68 and aspartate 86. Residue threonine 105 participates in 4-amino-2-methyl-5-(diphosphooxymethyl)pyrimidine binding. Residue serine 132–threonine 134 participates in 2-[(2R,5Z)-2-carboxy-4-methylthiazol-5(2H)-ylidene]ethyl phosphate binding. Lysine 135 contributes to the 4-amino-2-methyl-5-(diphosphooxymethyl)pyrimidine binding site. Glycine 162 serves as a coordination point for 2-[(2R,5Z)-2-carboxy-4-methylthiazol-5(2H)-ylidene]ethyl phosphate.

The protein belongs to the thiamine-phosphate synthase family. It depends on Mg(2+) as a cofactor.

It carries out the reaction 2-[(2R,5Z)-2-carboxy-4-methylthiazol-5(2H)-ylidene]ethyl phosphate + 4-amino-2-methyl-5-(diphosphooxymethyl)pyrimidine + 2 H(+) = thiamine phosphate + CO2 + diphosphate. The enzyme catalyses 2-(2-carboxy-4-methylthiazol-5-yl)ethyl phosphate + 4-amino-2-methyl-5-(diphosphooxymethyl)pyrimidine + 2 H(+) = thiamine phosphate + CO2 + diphosphate. It catalyses the reaction 4-methyl-5-(2-phosphooxyethyl)-thiazole + 4-amino-2-methyl-5-(diphosphooxymethyl)pyrimidine + H(+) = thiamine phosphate + diphosphate. The protein operates within cofactor biosynthesis; thiamine diphosphate biosynthesis; thiamine phosphate from 4-amino-2-methyl-5-diphosphomethylpyrimidine and 4-methyl-5-(2-phosphoethyl)-thiazole: step 1/1. Functionally, condenses 4-methyl-5-(beta-hydroxyethyl)thiazole monophosphate (THZ-P) and 2-methyl-4-amino-5-hydroxymethyl pyrimidine pyrophosphate (HMP-PP) to form thiamine monophosphate (TMP). The chain is Thiamine-phosphate synthase from Pseudomonas syringae pv. tomato (strain ATCC BAA-871 / DC3000).